A 659-amino-acid chain; its full sequence is Pesticidal crystal protein Cry3Ba (659 aa).

A disordered region spans residues 1 to 41 (MIRMGGRKMNPNNRSEYDTIKVTPNSELPTNHNQYPLADNP). Over residues 22-41 (VTPNSELPTNHNQYPLADNP) the composition is skewed to polar residues.

This sequence belongs to the delta endotoxin family.

Functionally, promotes colloidosmotic lysis by binding to the midgut epithelial cells of Coleoptera. The sequence is that of Pesticidal crystal protein Cry3Ba (cry3Ba) from Bacillus thuringiensis subsp. tolworthi.